Here is a 120-residue protein sequence, read N- to C-terminus: uncharacterized protein (120 aa).

A run of 2 helical transmembrane segments spans residues 8 to 28 (PFVTGVLLPSAVFSFLFCTLV) and 55 to 75 (FLENTLIFLGSGNLTAHIGIL).

It is found in the membrane. This is an uncharacterized protein from Saccharomyces cerevisiae (strain ATCC 204508 / S288c) (Baker's yeast).